The primary structure comprises 240 residues: 1-(5-phosphoribosyl)-5-[(5-phosphoribosylamino)methylideneamino] imidazole-4-carboxamide isomerase (240 aa).

D8 functions as the Proton acceptor in the catalytic mechanism. Catalysis depends on D129, which acts as the Proton donor.

Belongs to the HisA/HisF family.

Its subcellular location is the cytoplasm. It carries out the reaction 1-(5-phospho-beta-D-ribosyl)-5-[(5-phospho-beta-D-ribosylamino)methylideneamino]imidazole-4-carboxamide = 5-[(5-phospho-1-deoxy-D-ribulos-1-ylimino)methylamino]-1-(5-phospho-beta-D-ribosyl)imidazole-4-carboxamide. It participates in amino-acid biosynthesis; L-histidine biosynthesis; L-histidine from 5-phospho-alpha-D-ribose 1-diphosphate: step 4/9. In Listeria monocytogenes serotype 4a (strain HCC23), this protein is 1-(5-phosphoribosyl)-5-[(5-phosphoribosylamino)methylideneamino] imidazole-4-carboxamide isomerase.